The following is a 356-amino-acid chain: MFNLCYKGQKLQRIVQSKRMEEPYFTFGIIADIQYADKDNRLNYLKTSMRYYRNSLTQLKVAIKEWATESIKPKFILQLGDIIDGVNTKDNSSTIALERVLEEMDKLPIQFHHVWGNHEFYNFSREYLNGSKLNSRARENRIDQQVGTSESGETNDESFYAYHFSPFPKFRFLLIDGYDLSPIGREKTSLKYDISFNLLKEKNPNEDLNSPTGLEEEQFVLFNGGISPSQLDWIQSILTSSDKKEEKVFVVSHLPVHPDAADTMCLIWNYPEVLSMLQSHPCVVGYLAGHNHEGRYCMDPSGIHHMTFSGVIETPPESQAFGTMYVYEDKMVLKGRGLVEDRTLHYRDPKNMQVGH.

Residues Asp32, Gln34, Asp81, Asn117, His253, His290, and His292 each coordinate Zn(2+).

The protein belongs to the ADPRibase-Mn family. As to quaternary structure, monomer. Mg(2+) is required as a cofactor.

The enzyme catalyses CDP-choline + H2O = phosphocholine + CMP + 2 H(+). The catalysed reaction is ADP-D-ribose + H2O = D-ribose 5-phosphate + AMP + 2 H(+). It catalyses the reaction CDP-glycerol + H2O = sn-glycerol 3-phosphate + CMP + 2 H(+). Hydrolyzes ADP-ribose, IDP-ribose, CDP-glycerol, CDP-choline and CDP-ethanolamine, but not other non-reducing ADP-sugars or CDP-glucose. This chain is Manganese-dependent ADP-ribose/CDP-alcohol diphosphatase (adprm), found in Xenopus laevis (African clawed frog).